Consider the following 799-residue polypeptide: ATP-dependent RNA helicase DBP7 (799 aa).

Disordered regions lie at residues lysine 34–arginine 177 and aspartate 201–leucine 229. Composition is skewed to basic and acidic residues over residues alanine 35–glutamine 49, isoleucine 56–aspartate 66, lysine 73–aspartate 100, glutamate 114–valine 132, and asparagine 139–leucine 172. Over residues valine 208–asparagine 220 the composition is skewed to acidic residues. The short motif at threonine 233–arginine 261 is the Q motif element. The 201-residue stretch at proline 265 to valine 465 folds into the Helicase ATP-binding domain. Residues alanine 278–threonine 285 and threonine 306–leucine 313 contribute to the ATP site. A DEAD box motif is present at residues aspartate 391 to aspartate 394. The 169-residue stretch at aspartate 511–lysine 679 folds into the Helicase C-terminal domain. Residues lysine 750–glutamate 799 are disordered. Basic and acidic residues predominate over residues lysine 754–arginine 780.

The protein belongs to the DEAD box helicase family. DDX31/DBP7 subfamily.

The protein resides in the nucleus. The protein localises to the nucleolus. It catalyses the reaction ATP + H2O = ADP + phosphate + H(+). Functionally, ATP-binding RNA helicase involved in the biogenesis of 60S ribosomal subunits and is required for the normal formation of 25S and 5.8S rRNAs. This Yarrowia lipolytica (strain CLIB 122 / E 150) (Yeast) protein is ATP-dependent RNA helicase DBP7 (DBP7).